A 426-amino-acid chain; its full sequence is Formyl-CoA:oxalate CoA-transferase (426 aa).

Residues 17 to 18 (QS), Arg38, 72 to 75 (LDTK), 96 to 98 (NFG), Arg104, and 136 to 139 (KVYE) contribute to the CoA site. The Nucleophile role is filled by Asp168. Substrate is bound at residue 247–249 (GGQ).

It belongs to the CoA-transferase III family. Frc subfamily. Homodimer.

The enzyme catalyses formyl-CoA + oxalate = oxalyl-CoA + formate. It participates in metabolic intermediate degradation; oxalate degradation; CO(2) and formate from oxalate: step 1/2. In terms of biological role, involved in the catabolism of oxalate and in the adapatation to low pH via the induction of the oxalate-dependent acid tolerance response (ATR). Catalyzes the transfer of the CoA moiety from formyl-CoA to oxalate. The sequence is that of Formyl-CoA:oxalate CoA-transferase from Rhodopseudomonas palustris (strain BisB18).